Here is a 276-residue protein sequence, read N- to C-terminus: 3-methyl-2-oxobutanoate hydroxymethyltransferase (276 aa).

The Mg(2+) site is built by Asp46 and Asp85. Residues Asp46 to Ser47, Asp85, and Lys115 contribute to the 3-methyl-2-oxobutanoate site. Glu117 is a binding site for Mg(2+). Glu184 serves as the catalytic Proton acceptor.

This sequence belongs to the PanB family. Homodecamer; pentamer of dimers. Mg(2+) serves as cofactor.

It is found in the cytoplasm. It catalyses the reaction 3-methyl-2-oxobutanoate + (6R)-5,10-methylene-5,6,7,8-tetrahydrofolate + H2O = 2-dehydropantoate + (6S)-5,6,7,8-tetrahydrofolate. It functions in the pathway cofactor biosynthesis; (R)-pantothenate biosynthesis; (R)-pantoate from 3-methyl-2-oxobutanoate: step 1/2. Its function is as follows. Catalyzes the reversible reaction in which hydroxymethyl group from 5,10-methylenetetrahydrofolate is transferred onto alpha-ketoisovalerate to form ketopantoate. This is 3-methyl-2-oxobutanoate hydroxymethyltransferase from Heliobacterium modesticaldum (strain ATCC 51547 / Ice1).